A 162-amino-acid chain; its full sequence is Transcription elongation factor GreA (162 aa).

Positions 44–72 form a coiled coil; the sequence is ENAEYHAAKEKQSHIERRIAELSDILSRA.

The protein belongs to the GreA/GreB family.

In terms of biological role, necessary for efficient RNA polymerase transcription elongation past template-encoded arresting sites. The arresting sites in DNA have the property of trapping a certain fraction of elongating RNA polymerases that pass through, resulting in locked ternary complexes. Cleavage of the nascent transcript by cleavage factors such as GreA or GreB allows the resumption of elongation from the new 3'terminus. GreA releases sequences of 2 to 3 nucleotides. The polypeptide is Transcription elongation factor GreA (Nautilia profundicola (strain ATCC BAA-1463 / DSM 18972 / AmH)).